The following is a 513-amino-acid chain: Ribonuclease Y (513 aa).

The chain crosses the membrane as a helical span at residues 6-26; it reads YIIIAVVIIIICVILGLYVVD. Residues 203–288 form the KH domain; the sequence is TVHVVNLPND…EMVEKAKKEV (86 aa). An HD domain is found at 329-422; that stretch reads VLKHSIEVSH…VQAADAISAA (94 aa).

Belongs to the RNase Y family.

The protein localises to the cell membrane. Functionally, endoribonuclease that initiates mRNA decay. This Clostridium botulinum (strain Loch Maree / Type A3) protein is Ribonuclease Y.